The following is a 424-amino-acid chain: Bone morphogenetic protein 10 (424 aa).

Residues 1 to 21 (MGSLVLTLCALFCLAAYLVSG) form the signal peptide. The propeptide occupies 22–316 (SPIMNLEQSP…IYDSTARIRR (295 aa)). N-linked (GlcNAc...) asparagine glycans are attached at residues asparagine 67 and asparagine 131. Disulfide bonds link cysteine 323/cysteine 389, cysteine 352/cysteine 421, and cysteine 356/cysteine 423.

Belongs to the TGF-beta family. As to quaternary structure, homodimer; disulfide-linked. Interacts with FBN1 (via N-terminal domain) and FBN2. Interacts with ENG. In terms of tissue distribution, detected in mammary epithelia (at protein level).

Its subcellular location is the secreted. In terms of biological role, required for maintaining the proliferative activity of embryonic cardiomyocytes by preventing premature activation of the negative cell cycle regulator CDKN1C/p57KIP and maintaining the required expression levels of cardiogenic factors such as MEF2C and NKX2-5. Acts as a ligand for ACVRL1/ALK1, BMPR1A/ALK3 and BMPR1B/ALK6, leading to activation of SMAD1, SMAD5 and SMAD8 transcription factors. Inhibits endothelial cell migration and growth. May reduce cell migration and cell matrix adhesion in breast cancer cell lines. This chain is Bone morphogenetic protein 10 (BMP10), found in Homo sapiens (Human).